Consider the following 271-residue polypeptide: Glutamate racemase (271 aa).

Substrate is bound by residues 10-11 (DS) and 42-43 (YG). Cysteine 73 serves as the catalytic Proton donor/acceptor. 74–75 (NT) is a substrate binding site. Cysteine 183 acts as the Proton donor/acceptor in catalysis. Residue 184–185 (TH) coordinates substrate.

This sequence belongs to the aspartate/glutamate racemases family.

It carries out the reaction L-glutamate = D-glutamate. The protein operates within cell wall biogenesis; peptidoglycan biosynthesis. Its function is as follows. Provides the (R)-glutamate required for cell wall biosynthesis. The protein is Glutamate racemase of Streptococcus thermophilus (strain ATCC BAA-250 / LMG 18311).